A 65-amino-acid chain; its full sequence is Large ribosomal subunit protein bL33c (65 aa).

Belongs to the bacterial ribosomal protein bL33 family.

The protein localises to the plastid. Its subcellular location is the chloroplast. The sequence is that of Large ribosomal subunit protein bL33c from Chaetosphaeridium globosum (Charophycean green alga).